Reading from the N-terminus, the 290-residue chain is GTPase Era (290 aa).

The region spanning 2-169 (KSGFVSIIGR…KDKIYENLNE (168 aa)) is the Era-type G domain. The interval 10 to 17 (GRPSTGKS) is G1. A GTP-binding site is contributed by 10–17 (GRPSTGKS). The segment at 36–40 (QTTRN) is G2. The interval 57–60 (DTPG) is G3. GTP-binding positions include 57–61 (DTPGF) and 119–122 (NKID). Positions 119–122 (NKID) are G4. The segment at 148–150 (ISA) is G5. The 77-residue stretch at 200–276 (LKEELPYSIY…NLFLQVKLRK (77 aa)) folds into the KH type-2 domain.

This sequence belongs to the TRAFAC class TrmE-Era-EngA-EngB-Septin-like GTPase superfamily. Era GTPase family. Monomer.

The protein resides in the cytoplasm. The protein localises to the cell inner membrane. Functionally, an essential GTPase that binds both GDP and GTP, with rapid nucleotide exchange. Plays a role in 16S rRNA processing and 30S ribosomal subunit biogenesis and possibly also in cell cycle regulation and energy metabolism. The sequence is that of GTPase Era from Borrelia duttonii (strain Ly).